The following is a 311-amino-acid chain: MNQTNKGEGQTAPQKESMGQILWQLTRPHTLTASFVPVLLGTVLAMFYVKVDLLLFLAMLFSCLWIQIATNLFNEYYDFKRGLDTAESVGIGGAIVRHGMKPKTILQLALASYGIAILLGVYICASSSWWLALIGLVGMAIGYLYTGGPLPIAYTPFGELFSGICMGSVFVLISFFIQTDKINMQSILISIPIAILVGAINLSNNIRDIEEDKKGGRKTLAILMGHKGAVTLLAASFAVAYIWVVGLVITGAASPWLFVVFLSVPKPVQAVKGFVQNEMPMNMIVAMKSTAQTNTFFGFLLSIGLLISYFR.

Helical transmembrane passes span 31–51 (LTASFVPVLLGTVLAMFYVKV), 53–73 (LLLFLAMLFSCLWIQIATNLF), 104–126 (TILQLALASYGIAILLGVYICAS), 131–153 (LALIGLVGMAIGYLYTGGPLPIA), 157–177 (FGELFSGICMGSVFVLISFFI), 182–202 (INMQSILISIPIAILVGAINL), 220–240 (LAILMGHKGAVTLLAASFAVA), 242–262 (IWVVGLVITGAASPWLFVVFL), and 290–310 (TAQTNTFFGFLLSIGLLISYF).

Belongs to the MenA family. Type 1 subfamily.

It localises to the cell membrane. The catalysed reaction is an all-trans-polyprenyl diphosphate + 1,4-dihydroxy-2-naphthoate + H(+) = a 2-demethylmenaquinol + CO2 + diphosphate. Its pathway is quinol/quinone metabolism; menaquinone biosynthesis; menaquinol from 1,4-dihydroxy-2-naphthoate: step 1/2. Functionally, conversion of 1,4-dihydroxy-2-naphthoate (DHNA) to demethylmenaquinone (DMK). This chain is 1,4-dihydroxy-2-naphthoate octaprenyltransferase, found in Bacillus subtilis (strain 168).